The sequence spans 520 residues: MEGVLYKWTNYLSGWQPRWFLLCGGILSYYDSPEDAWKGCKGSIQMAVCEIQVHSVDNTRMDLIIPGEQYFYLKARSVAERQRWLVALGSAKACLTDSRTQKEKEFAENTENLKTKMSELRLYCDLLVQQVDKTKEVTTTGVSSSEEGIDVGTLLKSTCNTFLKTLEECMQIANAAFTSELLYRTPPGSPQLAMLKSNKMKHPIVPIHNSLERQMELNSCENGSLNMEINDDEEILVRNKSSLCLKPAETDCSISSEENTDDNITVQGEMMKENGEESLGNHDSDLAQPELHSTSSSPESHWEEDQEVIPTFFSTMNTSFSDIELLEDSGIPTEAFLASCYAVVPVLDKLGPTVFAPVKMDLVGNIKKVNQKYITNKEEFTTLQKIVLHEVEADVAQVRNSATEALLWLKRGLKFLKGFLTEVKNGEKDIQTALNNAYGKTLRQHHGWVVRGVFALALRAAPSYEDFVAALTIKEGDHQKAAFSVGMQRDLSLYLPAMEKQLAILDTLYEVHGLESDEVV.

A PH domain is found at 1-93 (MEGVLYKWTN…WLVALGSAKA (93 aa)). Threonine 139 carries the post-translational modification Phosphothreonine. A Phosphoserine modification is found at serine 145. Phosphothreonine is present on threonine 153. A compositionally biased stretch (basic and acidic residues) spans 275–285 (GEESLGNHDSD). The segment at 275 to 305 (GEESLGNHDSDLAQPELHSTSSSPESHWEED) is disordered. Positions 311–520 (TFFSTMNTSF…VHGLESDEVV (210 aa)) are glycolipid transfer protein homology domain.

In terms of assembly, homodimer. Interacts with ARF1; the interaction together with phosphatidylinositol 4-phosphate binding is required for FAPP2 GlcCer transfer ability.

It localises to the cytoplasm. It is found in the golgi apparatus. The protein localises to the trans-Golgi network membrane. The protein resides in the membrane. Functionally, cargo transport protein that is required for apical transport from the trans-Golgi network (TGN). Transports AQP2 from the trans-Golgi network (TGN) to sites of AQP2 phosphorylation. Mediates the non-vesicular transport of glucosylceramide (GlcCer) from the trans-Golgi network (TGN) to the plasma membrane and plays a pivotal role in the synthesis of complex glycosphingolipids. Binding of both phosphatidylinositol 4-phosphate (PIP) and ARF1 are essential for the GlcCer transfer ability. Also required for primary cilium formation, possibly by being involved in the transport of raft lipids to the apical membrane, and for membrane tubulation. This Bos taurus (Bovine) protein is Pleckstrin homology domain-containing family A member 8 (PLEKHA8).